The primary structure comprises 156 residues: Pilin-like protein PilA1 (156 aa).

A propeptide spans 1 to 5 (MTRRG) (leader sequence). Residue leucine 6 is modified to N-methylleucine. A helical membrane pass occupies residues 6 to 29 (LTLLELLLVLGILGVLLGLALPLL).

The protein resides in the cell inner membrane. Its subcellular location is the cell outer membrane. It localises to the periplasm. Functionally, plays an essential role in natural DNA transformation but is not required for pilus biogenesis. The protein is Pilin-like protein PilA1 (pilA1) of Thermus thermophilus (strain ATCC BAA-163 / DSM 7039 / HB27).